The sequence spans 415 residues: F-box/kelch-repeat protein At2g29600 (415 aa).

The tract at residues 1-58 (MASISETSDDGSNGGDPNQKPEEPHKNPQEGKEEENQNEKPKEDDHQEEEVENVPQIP) is disordered. Over residues 19 to 45 (QKPEEPHKNPQEGKEEENQNEKPKEDD) the composition is skewed to basic and acidic residues. The region spanning 56 to 103 (QIPPQMPLELIVSTIATLRRCHYPTLSLLSDSFRQVISSVDLFQTRSL) is the F-box domain. Kelch repeat units lie at residues 161-208 (KIYV…VIDG), 210-254 (IYVV…FNVH), 260-309 (KIYI…AVVP), and 311-355 (HLHV…KLMI).

The polypeptide is F-box/kelch-repeat protein At2g29600 (Arabidopsis thaliana (Mouse-ear cress)).